Consider the following 276-residue polypeptide: NH(3)-dependent NAD(+) synthetase (276 aa).

46–53 contacts ATP; sequence GISGGQDS. Asp52 lines the Mg(2+) pocket. Arg140 contributes to the deamido-NAD(+) binding site. Thr160 contributes to the ATP binding site. Residue Glu165 coordinates Mg(2+). 2 residues coordinate deamido-NAD(+): Lys173 and Asp180. Lys189 and Thr211 together coordinate ATP. Position 260–261 (260–261) interacts with deamido-NAD(+); the sequence is HK.

This sequence belongs to the NAD synthetase family. In terms of assembly, homodimer.

It carries out the reaction deamido-NAD(+) + NH4(+) + ATP = AMP + diphosphate + NAD(+) + H(+). It participates in cofactor biosynthesis; NAD(+) biosynthesis; NAD(+) from deamido-NAD(+) (ammonia route): step 1/1. Catalyzes the ATP-dependent amidation of deamido-NAD to form NAD. Uses ammonia as a nitrogen source. The chain is NH(3)-dependent NAD(+) synthetase from Citrobacter koseri (strain ATCC BAA-895 / CDC 4225-83 / SGSC4696).